A 113-amino-acid polypeptide reads, in one-letter code: Large ribosomal subunit protein uL22 (113 aa).

It belongs to the universal ribosomal protein uL22 family. In terms of assembly, part of the 50S ribosomal subunit.

Its function is as follows. This protein binds specifically to 23S rRNA; its binding is stimulated by other ribosomal proteins, e.g. L4, L17, and L20. It is important during the early stages of 50S assembly. It makes multiple contacts with different domains of the 23S rRNA in the assembled 50S subunit and ribosome. Functionally, the globular domain of the protein is located near the polypeptide exit tunnel on the outside of the subunit, while an extended beta-hairpin is found that lines the wall of the exit tunnel in the center of the 70S ribosome. This Bacillus mycoides (strain KBAB4) (Bacillus weihenstephanensis) protein is Large ribosomal subunit protein uL22.